The primary structure comprises 552 residues: Gamma-aminobutyric acid receptor subunit alpha-4 (552 aa).

An N-terminal signal peptide occupies residues 1–35 (MVSVQKVPAIVLCSGVSLALLHVLCLATCLNESPG). Topologically, residues 36 to 259 (QNSKDEKLCP…FHLRRKMGYF (224 aa)) are extracellular. N-linked (GlcNAc...) asparagine glycosylation is present at Asn-47. Arg-100 contacts 4-aminobutanoate. 2 N-linked (GlcNAc...) asparagine glycosylation sites follow: Asn-144 and Asn-157. Thr-163 serves as a coordination point for 4-aminobutanoate. A disulfide bridge connects residues Cys-172 and Cys-186. A helical membrane pass occupies residues 260-280 (MIQTYIPCIMTVILSQVSFWI). The Cytoplasmic segment spans residues 281 to 284 (NKES). Residues 285–305 (VPARTVFGITTVLTMTTLSIS) form a helical membrane-spanning segment. Topologically, residues 306-318 (ARHSLPKVSYATA) are extracellular. The chain crosses the membrane as a helical span at residues 319 to 341 (MDWFIAVCFAFVFSALIEFAAVN). Residues 342 to 515 (YFTNIQMQKA…PPPSGSGTSK (174 aa)) are Cytoplasmic-facing. 3 disordered regions span residues 353 to 436 (KKIS…NPFS), 448 to 470 (ARGLSSAASPSPHGTLQPAPLRS), and 486 to 513 (TTVNTTGVPGNVSATPPPSAPPPSGSGT). Positions 403–423 (RTEVGNHSSKTTAAQESSETT) are enriched in polar residues. Composition is skewed to low complexity over residues 448–458 (ARGLSSAASPS) and 486–499 (TTVNTTGVPGNVSA). Positions 500-509 (TPPPSAPPPS) are enriched in pro residues. The chain crosses the membrane as a helical span at residues 516–538 (IDKYARILFPVTFGAFNMVYWVV). Topologically, residues 539-552 (YLSKDTMEKSESLM) are extracellular.

It belongs to the ligand-gated ion channel (TC 1.A.9) family. Gamma-aminobutyric acid receptor (TC 1.A.9.5) subfamily. GABRA4 sub-subfamily. In terms of assembly, heteropentamer, formed by a combination of alpha (GABRA1-6), beta (GABRB1-3), gamma (GABRG1-3), delta (GABRD), epsilon (GABRE), rho (GABRR1-3), pi (GABRP) and theta (GABRQ) chains, each subunit exhibiting distinct physiological and pharmacological properties. In terms of tissue distribution, expressed in the brain.

The protein localises to the cell membrane. It is found in the postsynaptic cell membrane. With respect to regulation, potentiated by histamine. In terms of biological role, alpha subunit of the heteropentameric ligand-gated chloride channel gated by gamma-aminobutyric acid (GABA), a major inhibitory neurotransmitter in the brain. GABA-gated chloride channels, also named GABA(A) receptors (GABAAR), consist of five subunits arranged around a central pore and contain GABA active binding site(s) located at the alpha and beta subunit interface(s). Alpha-4/GABRA4 subunit often assembles with delta or gamma-2 subunits, in combination with beta subunits. When activated by GABA, GABAARs selectively allow the flow of chloride anions across the cell membrane down their electrochemical gradient. GABAARs containing alpha-4 are predominantly extrasynaptic, contributing to tonic inhibition in dentate granule cells and thalamic relay neurons. Extrasynaptic alpha-4-containing GABAARs control levels of excitability and network activity. GABAAR containing alpha-4-beta-3-delta subunits can simultaneously bind GABA and histamine where histamine binds at the interface of two neighboring beta subunits, which may be involved in the regulation of sleep and wakefulness. This chain is Gamma-aminobutyric acid receptor subunit alpha-4, found in Rattus norvegicus (Rat).